A 479-amino-acid chain; its full sequence is Aspartyl/glutamyl-tRNA(Asn/Gln) amidotransferase subunit B (479 aa).

This sequence belongs to the GatB/GatE family. GatB subfamily. Heterotrimer of A, B and C subunits.

It carries out the reaction L-glutamyl-tRNA(Gln) + L-glutamine + ATP + H2O = L-glutaminyl-tRNA(Gln) + L-glutamate + ADP + phosphate + H(+). The catalysed reaction is L-aspartyl-tRNA(Asn) + L-glutamine + ATP + H2O = L-asparaginyl-tRNA(Asn) + L-glutamate + ADP + phosphate + 2 H(+). In terms of biological role, allows the formation of correctly charged Asn-tRNA(Asn) or Gln-tRNA(Gln) through the transamidation of misacylated Asp-tRNA(Asn) or Glu-tRNA(Gln) in organisms which lack either or both of asparaginyl-tRNA or glutaminyl-tRNA synthetases. The reaction takes place in the presence of glutamine and ATP through an activated phospho-Asp-tRNA(Asn) or phospho-Glu-tRNA(Gln). This is Aspartyl/glutamyl-tRNA(Asn/Gln) amidotransferase subunit B from Geotalea uraniireducens (strain Rf4) (Geobacter uraniireducens).